Here is a 252-residue protein sequence, read N- to C-terminus: 5-oxoprolinase subunit A (252 aa).

The protein belongs to the LamB/PxpA family. In terms of assembly, forms a complex composed of PxpA, PxpB and PxpC.

It catalyses the reaction 5-oxo-L-proline + ATP + 2 H2O = L-glutamate + ADP + phosphate + H(+). Functionally, catalyzes the cleavage of 5-oxoproline to form L-glutamate coupled to the hydrolysis of ATP to ADP and inorganic phosphate. This Mycobacterium ulcerans (strain Agy99) protein is 5-oxoprolinase subunit A.